The following is a 327-amino-acid chain: GTPase Obg (327 aa).

The region spanning 1–159 (MKFLDQVKIY…YVIWLQLKTI (159 aa)) is the Obg domain. Positions 160-327 (ADVGIVGLPN…IKAKLLSYVS (168 aa)) constitute an OBG-type G domain. Residues 166–173 (GLPNAGKS), 191–195 (FTTLN), 212–215 (DIPG), 279–282 (NKTD), and 308–310 (STL) contribute to the GTP site. Positions 173 and 193 each coordinate Mg(2+).

Belongs to the TRAFAC class OBG-HflX-like GTPase superfamily. OBG GTPase family. In terms of assembly, monomer. Mg(2+) serves as cofactor.

Its subcellular location is the cytoplasm. Its function is as follows. An essential GTPase which binds GTP, GDP and possibly (p)ppGpp with moderate affinity, with high nucleotide exchange rates and a fairly low GTP hydrolysis rate. Plays a role in control of the cell cycle, stress response, ribosome biogenesis and in those bacteria that undergo differentiation, in morphogenesis control. This is GTPase Obg from Pelagibacter ubique (strain HTCC1062).